The primary structure comprises 187 residues: Orotate phosphoribosyltransferase (187 aa).

Residues arginine 98, lysine 99, lysine 102, histidine 104, and 128-136 (EDVTTTGGS) contribute to the 5-phospho-alpha-D-ribose 1-diphosphate site. Residues threonine 132 and arginine 160 each coordinate orotate.

The protein belongs to the purine/pyrimidine phosphoribosyltransferase family. PyrE subfamily. As to quaternary structure, homodimer. The cofactor is Mg(2+).

The enzyme catalyses orotidine 5'-phosphate + diphosphate = orotate + 5-phospho-alpha-D-ribose 1-diphosphate. The protein operates within pyrimidine metabolism; UMP biosynthesis via de novo pathway; UMP from orotate: step 1/2. Its function is as follows. Catalyzes the transfer of a ribosyl phosphate group from 5-phosphoribose 1-diphosphate to orotate, leading to the formation of orotidine monophosphate (OMP). This is Orotate phosphoribosyltransferase from Bradyrhizobium diazoefficiens (strain JCM 10833 / BCRC 13528 / IAM 13628 / NBRC 14792 / USDA 110).